The sequence spans 744 residues: Glucosamine inositolphosphorylceramide transferase 1 (744 aa).

Transmembrane regions (helical) follow at residues 31–51 (FLVA…WLVV), 378–398 (SLFG…VGFV), and 460–480 (LFFC…VHFL). Residues Asn534, 558–563 (NSLNNR), 579–581 (DDD), Arg609, and 665–669 (FNCED) contribute to the substrate site. Mn(2+) is bound at residue Asp581. A disulfide bridge connects residues Cys667 and Cys718. Residue Asp669 is part of the active site.

The protein belongs to the glycosyltransferase 64 family. It depends on Mn(2+) as a cofactor. Highly expressed in almost all tissues.

It is found in the membrane. It participates in sphingolipid metabolism. Functionally, essential protein. Glycosyltransferase that mediates the glycosylation of glycosylinositol phosphorylceramides (GIPCs), the major sphingolipids in the plasma membrane; acts as a HexN(Ac)-specific GIPC sugar transferase. Responsible for the glycosylation of a subgroup of GIPCs found in seeds and pollen that contain GlcNAc and GlcN (GlcN(Ac)). Maybe involved in the maintenance of cell-cell adhesion. In Oryza sativa subsp. japonica (Rice), this protein is Glucosamine inositolphosphorylceramide transferase 1.